Here is a 594-residue protein sequence, read N- to C-terminus: Aspartate--tRNA(Asp/Asn) ligase (594 aa).

Glutamate 173 serves as a coordination point for L-aspartate. An aspartate region spans residues 197–200; that stretch reads QLFK. Residue arginine 219 coordinates L-aspartate. ATP-binding positions include 219 to 221 and glutamine 228; that span reads RDE. Histidine 449 serves as a coordination point for L-aspartate. Glutamate 482 contacts ATP. Arginine 489 contributes to the L-aspartate binding site. 534 to 537 is an ATP binding site; sequence GLDR.

The protein belongs to the class-II aminoacyl-tRNA synthetase family. Type 1 subfamily. Homodimer.

The protein resides in the cytoplasm. The enzyme catalyses tRNA(Asx) + L-aspartate + ATP = L-aspartyl-tRNA(Asx) + AMP + diphosphate. Aspartyl-tRNA synthetase with relaxed tRNA specificity since it is able to aspartylate not only its cognate tRNA(Asp) but also tRNA(Asn). Reaction proceeds in two steps: L-aspartate is first activated by ATP to form Asp-AMP and then transferred to the acceptor end of tRNA(Asp/Asn). The protein is Aspartate--tRNA(Asp/Asn) ligase of Saccharophagus degradans (strain 2-40 / ATCC 43961 / DSM 17024).